A 74-amino-acid chain; its full sequence is ATP synthase subunit c (74 aa).

2 consecutive transmembrane segments (helical) span residues 5-25 (LAHIGAGLAAIGSGAAAIGVG) and 49-69 (LFIGIAFAEALGIFAFLVALL).

The protein belongs to the ATPase C chain family. In terms of assembly, F-type ATPases have 2 components, F(1) - the catalytic core - and F(0) - the membrane proton channel. F(1) has five subunits: alpha(3), beta(3), gamma(1), delta(1), epsilon(1). F(0) has four main subunits: a(1), b(1), b'(1) and c(10-14). The alpha and beta chains form an alternating ring which encloses part of the gamma chain. F(1) is attached to F(0) by a central stalk formed by the gamma and epsilon chains, while a peripheral stalk is formed by the delta, b and b' chains.

The protein localises to the cell inner membrane. In terms of biological role, f(1)F(0) ATP synthase produces ATP from ADP in the presence of a proton or sodium gradient. F-type ATPases consist of two structural domains, F(1) containing the extramembraneous catalytic core and F(0) containing the membrane proton channel, linked together by a central stalk and a peripheral stalk. During catalysis, ATP synthesis in the catalytic domain of F(1) is coupled via a rotary mechanism of the central stalk subunits to proton translocation. Functionally, key component of the F(0) channel; it plays a direct role in translocation across the membrane. A homomeric c-ring of between 10-14 subunits forms the central stalk rotor element with the F(1) delta and epsilon subunits. In Roseobacter denitrificans (strain ATCC 33942 / OCh 114) (Erythrobacter sp. (strain OCh 114)), this protein is ATP synthase subunit c.